Consider the following 405-residue polypeptide: Argininosuccinate synthase (405 aa).

An ATP-binding site is contributed by 12-20 (AYSGGLDTS). 2 residues coordinate L-citrulline: Tyr92 and Ser97. Residue Gly122 coordinates ATP. L-aspartate contacts are provided by Thr124, Asn128, and Asp129. Position 128 (Asn128) interacts with L-citrulline. Residues Arg132, Ser181, Ser190, Glu266, and Tyr278 each contribute to the L-citrulline site.

This sequence belongs to the argininosuccinate synthase family. Type 1 subfamily. In terms of assembly, homotetramer.

It localises to the cytoplasm. The enzyme catalyses L-citrulline + L-aspartate + ATP = 2-(N(omega)-L-arginino)succinate + AMP + diphosphate + H(+). It functions in the pathway amino-acid biosynthesis; L-arginine biosynthesis; L-arginine from L-ornithine and carbamoyl phosphate: step 2/3. In Cronobacter sakazakii (strain ATCC BAA-894) (Enterobacter sakazakii), this protein is Argininosuccinate synthase.